Here is a 447-residue protein sequence, read N- to C-terminus: MPDRAQVIIRIVPGGGTKTLQQIINQLEYLSRKGRLELQRSARHLDIPLPPDQIHELARSWVQETGTYDESQPDEERQQELTTHIIVSFPAGTSQVAAYAASREWAAEMFGSGAGGGRYNYLTAFHIDRDHPHLHVVVNRRELLGHGWLKISRRHPQLNYDALRIKMAEISLRHGIALDASRRAERGITERPITYAQYRRLEREQARQIRFEDADLEQSSPQGDHPEFSQPFDTSPFEASAGGPEDMPRPNNRQNESQVHLQEPAGVSNEAGVLVRVALETERLAQPFVSETILADDIGSGSSRVAEGRVESANRTPDIPRAATEAATHTTHDRQRRAKRPHDDDGGPSGAKRVTLEGIAVGPQANAGEQDGSSGPLVRQAGTSRPSPPTATTRASTATDSLSATAHLQQRRGVLSKRPREDDDGEPSERKRERDERSKDGRGGNRR.

Disordered stretches follow at residues 214–265 and 300–447; these read ADLE…QEPA and SGSS…GNRR. Over residues 251-260 the composition is skewed to polar residues; it reads NNRQNESQVH. Residues 390-406 show a composition bias toward low complexity; sequence TATTRASTATDSLSATA. Positions 427–447 are enriched in basic and acidic residues; the sequence is PSERKRERDERSKDGRGGNRR.

In terms of biological role, tumor formation by A.tumefaciens involves the transfer and integration of a defined segment (T-DNA) of Ti plasmid DNA into the plant nuclear genome. The virD operon encodes a site-specific endonuclease that cleaves at a unique site within both 24 bp direct repeats flanking the T-DNA. The protein is T-DNA border endonuclease VirD2 (virD2) of Agrobacterium fabrum (strain C58 / ATCC 33970) (Agrobacterium tumefaciens (strain C58)).